The following is a 520-amino-acid chain: DNA-(apurinic or apyrimidinic site) endonuclease 2 (520 aa).

E59 serves as a coordination point for Mg(2+). The active site involves Y181. Mg(2+) contacts are provided by D222, N224, and D353. D222 serves as the catalytic Proton donor/acceptor. Zn(2+)-binding residues include C476, H478, C500, and C514. The GRF-type zinc-finger motif lies at 476 to 520; that stretch reads CRHGEESMLKTSKTSANPGRKFWICKRSRGDSNNTESSCGFFQWV.

Belongs to the DNA repair enzymes AP/ExoA family. Mg(2+) serves as cofactor. It depends on Mn(2+) as a cofactor.

The protein localises to the nucleus. The enzyme catalyses Exonucleolytic cleavage in the 3'- to 5'-direction to yield nucleoside 5'-phosphates.. Its function is as follows. DNA repair enzyme that cleaves apurinic/apyrimidinic (AP) sites and removes 3'-blocking groups present at single strand breaks of damaged DNA. This Saccharomyces cerevisiae (strain ATCC 204508 / S288c) (Baker's yeast) protein is DNA-(apurinic or apyrimidinic site) endonuclease 2 (APN2).